The sequence spans 454 residues: tRNA-2-methylthio-N(6)-dimethylallyladenosine synthase (454 aa).

One can recognise an MTTase N-terminal domain in the interval 6 to 122 (RHYHITTFGC…LKDLLESVFD (117 aa)). Positions 15, 51, 85, 157, 161, and 164 each coordinate [4Fe-4S] cluster. Positions 143-381 (RDSKVTAWVN…HLGNLKVAER (239 aa)) constitute a Radical SAM core domain. Residues 383-447 (QRYFGRIEEV…PFSLTGQPVE (65 aa)) enclose the TRAM domain.

This sequence belongs to the methylthiotransferase family. MiaB subfamily. As to quaternary structure, monomer. It depends on [4Fe-4S] cluster as a cofactor.

It is found in the cytoplasm. The catalysed reaction is N(6)-dimethylallyladenosine(37) in tRNA + (sulfur carrier)-SH + AH2 + 2 S-adenosyl-L-methionine = 2-methylsulfanyl-N(6)-dimethylallyladenosine(37) in tRNA + (sulfur carrier)-H + 5'-deoxyadenosine + L-methionine + A + S-adenosyl-L-homocysteine + 2 H(+). Functionally, catalyzes the methylthiolation of N6-(dimethylallyl)adenosine (i(6)A), leading to the formation of 2-methylthio-N6-(dimethylallyl)adenosine (ms(2)i(6)A) at position 37 in tRNAs that read codons beginning with uridine. The polypeptide is tRNA-2-methylthio-N(6)-dimethylallyladenosine synthase (Nostoc punctiforme (strain ATCC 29133 / PCC 73102)).